The primary structure comprises 404 residues: Caspase-1 (404 aa).

The CARD domain maps to 1–91 (MADKVLKEKR…HLAGVLELST (91 aa)). Residues 1–119 (MADKVLKEKR…PFPAPQTVQD (119 aa)) constitute a propeptide that is removed on maturation. The disordered stretch occupies residues 111-132 (FPAPQTVQDNPVKPASSEPRGS). Active-site residues include His237 and Cys285. The propeptide occupies 298–316 (SVGPSGNSSLLAAEDFEYD). A Phosphoserine modification is found at Ser302.

Belongs to the peptidase C14A family. In terms of assembly, heterotetramer that consists of two anti-parallel arranged heterodimers, each one formed by a 20 kDa (Caspase-1 subunit p20) and a 10 kDa (Caspase-1 subunit p10) subunit. May be a component of the inflammasome, a protein complex which also includes PYCARD, CARD8 and NLRP2 and whose function would be the activation of pro-inflammatory caspases. Component of the AIM2 PANoptosome complex, a multiprotein complex that drives inflammatory cell death (PANoptosis). Both the p10 and p20 subunits interact with MEFV. Interacts with CARD17P/INCA and CARD18. Interacts with SERPINB1; this interaction regulates CASP1 activity. Heterotetramer that consists of two anti-parallel arranged heterodimers, each one formed by a 20 kDa (Caspase-1 subunit p20) and a 10 kDa (Caspase-1 subunit p10) subunit. In terms of processing, the two subunits are derived from the precursor sequence by an autocatalytic mechanism. Post-translationally, ubiquitinated via 'Lys-11'-linked polyubiquitination. Deubiquitinated by USP8.

It is found in the cytoplasm. The protein localises to the cell membrane. The catalysed reaction is Strict requirement for an Asp residue at position P1 and has a preferred cleavage sequence of Tyr-Val-Ala-Asp-|-.. In terms of biological role, thiol protease involved in a variety of inflammatory processes by proteolytically cleaving other proteins, such as the precursors of the inflammatory cytokines interleukin-1 beta (IL1B) and interleukin 18 (IL18) as well as the pyroptosis inducer Gasdermin-D (GSDMD), into active mature peptides. Plays a key role in cell immunity as an inflammatory response initiator: once activated through formation of an inflammasome complex, it initiates a pro-inflammatory response through the cleavage of the two inflammatory cytokines IL1B and IL18, releasing the mature cytokines which are involved in a variety of inflammatory processes. Cleaves a tetrapeptide after an Asp residue at position P1. Also initiates pyroptosis, a programmed lytic cell death pathway, through cleavage of GSDMD. In contrast to cleavage of interleukin IL1B, recognition and cleavage of GSDMD is not strictly dependent on the consensus cleavage site but depends on an exosite interface on CASP1 that recognizes and binds the Gasdermin-D, C-terminal (GSDMD-CT) part. Cleaves and activates CASP7 in response to bacterial infection, promoting plasma membrane repair. Upon inflammasome activation, during DNA virus infection but not RNA virus challenge, controls antiviral immunity through the cleavage of CGAS, rendering it inactive. In apoptotic cells, cleaves SPHK2 which is released from cells and remains enzymatically active extracellularly. The polypeptide is Caspase-1 (CASP1) (Sus scrofa (Pig)).